A 271-amino-acid polypeptide reads, in one-letter code: ATP-dependent Clp protease proteolytic subunit 6, chloroplastic (271 aa).

The tract at residues 1-30 (MAGLAISPPLGLSFSSRTRNPKPTSFLSHN) is disordered. A chloroplast-targeting transit peptide spans 1-77 (MAGLAISPPL…KAPRFGVIEA (77 aa)). Over residues 13-30 (SFSSRTRNPKPTSFLSHN) the composition is skewed to polar residues. Serine 175 (nucleophile) is an active-site residue. Residue histidine 200 is part of the active site.

It belongs to the peptidase S14 family. As to quaternary structure, component of the chloroplastic Clp protease core complex which consist of at least 16 proteins: CLPP4 (3 copies), CLPP5 (3 copies), CLPR4 (2 copies), ClpP1 (1 copy), CLPP6 (1 copy), CLPR2 (1 copy), CLPT1 (1 copy), CLPT2 (1 copy) and 3 copies of CLPP3 and/or CLPR1 and/or CLPR3. The core complex is organized in two heptameric rings, one containing CLPP3,4,5,6 in a 1:2:3:1 ratio and the other CLPP1 and CLPR1,2,3,4 in a 3:1:1:1:1 ratio. Mostly expressed in leaves. Also detected in stems, and to a lower extent, in roots (at protein level).

It is found in the plastid. The protein localises to the chloroplast stroma. It carries out the reaction Hydrolysis of proteins to small peptides in the presence of ATP and magnesium. alpha-casein is the usual test substrate. In the absence of ATP, only oligopeptides shorter than five residues are hydrolyzed (such as succinyl-Leu-Tyr-|-NHMec, and Leu-Tyr-Leu-|-Tyr-Trp, in which cleavage of the -Tyr-|-Leu- and -Tyr-|-Trp bonds also occurs).. In terms of biological role, cleaves peptides in various proteins in a process that requires ATP hydrolysis. Has a chymotrypsin-like activity. Plays a major role in the degradation of misfolded proteins. Essential protein required for chloroplast development and integrity. This chain is ATP-dependent Clp protease proteolytic subunit 6, chloroplastic, found in Arabidopsis thaliana (Mouse-ear cress).